Consider the following 69-residue polypeptide: Cap-specific mRNA (nucleoside-2'-O-)-methyltransferase (69 aa).

Tyr22 serves as a coordination point for mRNA. S-adenosyl-L-methionine is bound by residues Gln39, Tyr66, and Gly68.

This sequence belongs to the class I-like SAM-binding methyltransferase superfamily. Poxvirus/kinetoplastid 2'-O-MTase family. In terms of assembly, interacts with poly(A) polymerase catalytic subunit OPG063. Interacts with OPG109 and OPG123; these interactions might help linking transcription to capping and polyadenylation.

The protein resides in the virion. The catalysed reaction is a 5'-end (N(7)-methyl 5'-triphosphoguanosine)-ribonucleoside in mRNA + S-adenosyl-L-methionine = a 5'-end (N(7)-methyl 5'-triphosphoguanosine)-(2'-O-methyl-ribonucleoside) in mRNA + S-adenosyl-L-homocysteine + H(+). In terms of biological role, displays methyltransferase, positive regulation of the poly(A) polymerase and transcription elongation activities. Involved in the modification of both mRNA ends and in intermediate and late gene positive transcription elongation. At the mRNAs 5' end, methylates the ribose 2' OH group of the first transcribed nucleotide, thereby producing a 2'-O-methylpurine cap. At the 3' end, functions as a processivity factor which stimulates the activity of the viral poly(A) polymerase OPG063 that creates mRNA's poly(A) tail. In the presence of OPG102, OPG063 does not dissociate from the RNA allowing tail elongation to around 250 adenylates. This chain is Cap-specific mRNA (nucleoside-2'-O-)-methyltransferase (OPG102), found in Sus scrofa (Pig).